The primary structure comprises 188 residues: GMP synthase [glutamine-hydrolyzing] subunit A (188 aa).

The Glutamine amidotransferase type-1 domain maps to 3–188; the sequence is PLYVVNNYGQ…FSICTGQNKG (186 aa). Cysteine 75 acts as the Nucleophile in catalysis. Residues histidine 162 and glutamate 164 contribute to the active site.

Heterodimer composed of a glutamine amidotransferase subunit (A) and a GMP-binding subunit (B).

It carries out the reaction XMP + L-glutamine + ATP + H2O = GMP + L-glutamate + AMP + diphosphate + 2 H(+). It participates in purine metabolism; GMP biosynthesis; GMP from XMP (L-Gln route): step 1/1. Catalyzes the synthesis of GMP from XMP. The protein is GMP synthase [glutamine-hydrolyzing] subunit A of Methanospirillum hungatei JF-1 (strain ATCC 27890 / DSM 864 / NBRC 100397 / JF-1).